Here is a 239-residue protein sequence, read N- to C-terminus: Mitochondrial fission factor homolog B (239 aa).

The Cytoplasmic segment spans residues 1 to 219 (MAEINRMQYE…ENKERVKHEM (219 aa)). The interval 107-139 (EGPAPATPHSKEVRSSGHLKRDGLASENSLRQN) is disordered. Residues 115–130 (HSKEVRSSGHLKRDGL) are compositionally biased toward basic and acidic residues. Positions 184-214 (DLALADAASLRRQIIKLNRRLLLLEEENKER) form a coiled coil. A helical; Anchor for type IV membrane protein membrane pass occupies residues 220-237 (TMYSIIIIFGLLNSWLWF). Residues 238-239 (RR) are Extracellular-facing.

This sequence belongs to the Tango11 family.

The protein resides in the mitochondrion outer membrane. The protein localises to the peroxisome. Functionally, plays a role in mitochondrial and peroxisomal fission. Promotes the recruitment and association of the fission mediator dynamin-related protein 1 (DNM1L) to the mitochondrial surface. In Xenopus laevis (African clawed frog), this protein is Mitochondrial fission factor homolog B (mff-b).